A 301-amino-acid polypeptide reads, in one-letter code: Putative S-adenosyl-L-methionine-dependent methyltransferase MUL_0450 (301 aa).

S-adenosyl-L-methionine-binding positions include D127 and 156 to 157 (DL).

Belongs to the UPF0677 family.

Functionally, exhibits S-adenosyl-L-methionine-dependent methyltransferase activity. This chain is Putative S-adenosyl-L-methionine-dependent methyltransferase MUL_0450, found in Mycobacterium ulcerans (strain Agy99).